The sequence spans 247 residues: tRNA (guanine-N(7)-)-methyltransferase (247 aa).

S-adenosyl-L-methionine-binding positions include G70, 93–94 (EI), 128–129 (NA), and L148. D151 is an active-site residue. 226-228 (SEE) lines the S-adenosyl-L-methionine pocket.

The protein belongs to the class I-like SAM-binding methyltransferase superfamily. TrmB family.

Its subcellular location is the nucleus. The catalysed reaction is guanosine(46) in tRNA + S-adenosyl-L-methionine = N(7)-methylguanosine(46) in tRNA + S-adenosyl-L-homocysteine. The protein operates within tRNA modification; N(7)-methylguanine-tRNA biosynthesis. Functionally, catalyzes the formation of N(7)-methylguanine at position 46 (m7G46) in tRNA. This is tRNA (guanine-N(7)-)-methyltransferase from Drosophila persimilis (Fruit fly).